A 245-amino-acid polypeptide reads, in one-letter code: Exosome complex component RRP41 (245 aa).

A2 is modified (N-acetylalanine).

The protein belongs to the RNase PH family. As to quaternary structure, component of the RNA exosome core complex (Exo-9), composed of EXOSC1, EXOSC2, EXOSC3, EXOSC4, EXOSC5, EXOSC6, EXOSC7, EXOSC8 and EXOSC9; within the complex interacts with EXOSC2, EXOSC7 and EXOSC9. The catalytically inactive RNA exosome core complex (Exo-9) associates with the catalytic subunit EXOSC10/RRP6. Exo-9 may associate with DIS3 to form the nucleolar exosome complex, or DIS3L to form the cytoplasmic exosome complex. Exo-9 is formed by a hexameric base ring consisting of the heterodimers EXOSC4-EXOSC9, EXOSC5-EXOSC8 and EXOSC6-EXOSC7, and a cap ring consisting of EXOSC1, EXOSC2 and EXOSC3. The RNA exosome complex associates with cofactors C1D/RRP47, MPHOSPH6/MPP6 and MTREX/MTR4. Interacts with DDX60. Interacts with DIS3; the interaction is direct.

It localises to the cytoplasm. The protein resides in the nucleus. The protein localises to the nucleolus. Its subcellular location is the nucleoplasm. Non-catalytic component of the RNA exosome complex which has 3'-&gt;5' exoribonuclease activity and participates in a multitude of cellular RNA processing and degradation events. In the nucleus, the RNA exosome complex is involved in proper maturation of stable RNA species such as rRNA, snRNA and snoRNA, in the elimination of RNA processing by-products and non-coding 'pervasive' transcripts, such as antisense RNA species and promoter-upstream transcripts (PROMPTs), and of mRNAs with processing defects, thereby limiting or excluding their export to the cytoplasm. The RNA exosome may be involved in Ig class switch recombination (CSR) and/or Ig variable region somatic hypermutation (SHM) by targeting AICDA deamination activity to transcribed dsDNA substrates. In the cytoplasm, the RNA exosome complex is involved in general mRNA turnover and specifically degrades inherently unstable mRNAs containing AU-rich elements (AREs) within their 3' untranslated regions, and in RNA surveillance pathways, preventing translation of aberrant mRNAs. It seems to be involved in degradation of histone mRNA. The catalytic inactive RNA exosome core complex of 9 subunits (Exo-9) is proposed to play a pivotal role in the binding and presentation of RNA for ribonucleolysis, and to serve as a scaffold for the association with catalytic subunits and accessory proteins or complexes. EXOSC4 binds to ARE-containing RNAs. The protein is Exosome complex component RRP41 (Exosc4) of Mus musculus (Mouse).